The following is a 251-amino-acid chain: Pyruvate formate-lyase-activating enzyme (251 aa).

In terms of domain architecture, Radical SAM core spans 15–244 (VDGPGLRYIL…KEAYRYVNFN (230 aa)). [4Fe-4S] cluster-binding residues include C29, C33, and C36. Residues 35 to 37 (YCH), G79, 134 to 136 (DIK), and H207 each bind S-adenosyl-L-methionine.

It belongs to the organic radical-activating enzymes family. Requires [4Fe-4S] cluster as cofactor.

It is found in the cytoplasm. The enzyme catalyses glycyl-[formate C-acetyltransferase] + reduced [flavodoxin] + S-adenosyl-L-methionine = glycin-2-yl radical-[formate C-acetyltransferase] + semiquinone [flavodoxin] + 5'-deoxyadenosine + L-methionine + H(+). Its function is as follows. Activation of pyruvate formate-lyase under anaerobic conditions by generation of an organic free radical, using S-adenosylmethionine and reduced flavodoxin as cosubstrates to produce 5'-deoxy-adenosine. The sequence is that of Pyruvate formate-lyase-activating enzyme (pflA) from Staphylococcus epidermidis (strain ATCC 12228 / FDA PCI 1200).